A 372-amino-acid chain; its full sequence is Pluviatolide O-methyltransferase (372 aa).

S-adenosyl-L-homocysteine contacts are provided by Gly-214, Asp-237, Asp-257, Met-258, and Lys-271. The active-site Proton acceptor is the His-275. Active-site residues include Asp-306 and Glu-338.

Belongs to the class I-like SAM-binding methyltransferase superfamily. Cation-independent O-methyltransferase family. COMT subfamily. Homodimer. As to expression, mostly expressed in stems, and, to a lower extent, in leaves.

The catalysed reaction is (-)-pluviatolide + S-adenosyl-L-methionine = (-)-bursehernin + S-adenosyl-L-homocysteine + H(+). Its pathway is aromatic compound metabolism; phenylpropanoid biosynthesis. Functionally, O-methyltransferase involved in the biosynthesis of etoposide, a chemotherapeutic compound of the topoisomerase inhibitor family. Catalyzes the methylation of (-)-pluviatolide to produce (-)-bursehernin. This Sinopodophyllum hexandrum (Himalayan may apple) protein is Pluviatolide O-methyltransferase.